A 379-amino-acid chain; its full sequence is Homeobox protein SBH1 (379 aa).

The segment at 75 to 125 is disordered; sequence NNHNNNKTDDDDNNNNTGLGYYFMESDHHHHHHGNNNNNGSSSSSSSSAVK. Over residues 109–122 the composition is skewed to low complexity; sequence NNNNNGSSSSSSSS. The 21-residue stretch at 261–281 folds into the ELK domain; that stretch reads DLKGQLLRKYSGYLGSLKQEF. The segment at residues 282–345 is a DNA-binding region (homeobox; TALE-type); the sequence is MKKRKKGKLP…NQRKRHWKPS (64 aa).

This sequence belongs to the TALE/KNOX homeobox family. In terms of tissue distribution, expressed mainly in embryonic tissues. Weakly detected in stems and hypocotyl.

It localises to the nucleus. Possible transcription activator involved in early embryonic development. Probably binds to the DNA sequence 5'-TGAC-3'. The polypeptide is Homeobox protein SBH1 (H1) (Glycine max (Soybean)).